We begin with the raw amino-acid sequence, 475 residues long: U3 small nucleolar RNA-interacting protein 2 (475 aa).

The segment at 1–75 (MSATAAARKR…EEEEELEETA (75 aa)) is disordered. A Nuclear localization signal motif is present at residues 8 to 40 (RKRGKPASGAGAGAGAGKRRRKADSAGDRGKSK). Arginine 10 is subject to Omega-N-methylarginine. N6-acetyllysine is present on residues lysine 12 and lysine 25. A phosphoserine mark is found at serine 50, serine 51, serine 53, and serine 57. Residues 65–74 (EEEEEELEET) are compositionally biased toward acidic residues. Residue lysine 113 forms a Glycyl lysine isopeptide (Lys-Gly) (interchain with G-Cter in SUMO2) linkage. WD repeat units follow at residues 144–183 (GHQL…KLHV), 197–236 (GHSS…HLYT), 239–278 (GHRD…YVET), 281–320 (GHQD…QLVF), 322–360 (GHQG…PLAL), 374–413 (EQPF…RQLD), and 419–460 (PLVG…NSVC).

Belongs to the WD repeat RRP9 family. As to quaternary structure, interacts specifically with the U3 small nucleolar RNA (U3 snoRNA). Binds a sub-fragment of the U3 snoRNA surrounding the B/C motif (3UBC). This association with the U3BC RNA is dependent on the binding of a protein called 15.5K to the box B/C motif. The association of the protein with the U3BC RNA was found to be also dependent on a conserved RNA structure that flanks the box B/C motif. Part of the small subunit (SSU) processome, composed of more than 70 proteins and the RNA chaperone small nucleolar RNA (snoRNA) U3. In terms of processing, acetylation at Lys-12 and Lys-25 by KAT2B/PCAF under stress impairs pre-rRNA processing. Deacetylation by SIRT7 enhances RRP9-binding to U3 snoRNA, which is a prerequisite for pre-rRNA processing.

The protein localises to the nucleus. Its subcellular location is the nucleolus. In terms of biological role, component of a nucleolar small nuclear ribonucleoprotein particle (snoRNP) thought to participate in the processing and modification of pre-ribosomal RNA (pre-rRNA). Part of the small subunit (SSU) processome, first precursor of the small eukaryotic ribosomal subunit. During the assembly of the SSU processome in the nucleolus, many ribosome biogenesis factors, an RNA chaperone and ribosomal proteins associate with the nascent pre-rRNA and work in concert to generate RNA folding, modifications, rearrangements and cleavage as well as targeted degradation of pre-ribosomal RNA by the RNA exosome. This is U3 small nucleolar RNA-interacting protein 2 from Homo sapiens (Human).